The chain runs to 359 residues: Fructose-bisphosphate aldolase (359 aa).

Ser-50 serves as a coordination point for D-glyceraldehyde 3-phosphate. Catalysis depends on Asp-83, which acts as the Proton donor. His-84, Asp-105, Glu-142, and His-198 together coordinate Zn(2+). Gly-199 contributes to the dihydroxyacetone phosphate binding site. His-232 serves as a coordination point for Zn(2+). Dihydroxyacetone phosphate contacts are provided by residues Gly-233–Ser-235 and Asn-275–Thr-278.

Belongs to the class II fructose-bisphosphate aldolase family. As to quaternary structure, homodimer. Zn(2+) serves as cofactor.

It carries out the reaction beta-D-fructose 1,6-bisphosphate = D-glyceraldehyde 3-phosphate + dihydroxyacetone phosphate. It functions in the pathway carbohydrate biosynthesis; Calvin cycle. It participates in carbohydrate degradation; glycolysis; D-glyceraldehyde 3-phosphate and glycerone phosphate from D-glucose: step 4/4. Its function is as follows. Catalyzes the aldol condensation of dihydroxyacetone phosphate (DHAP or glycerone-phosphate) with glyceraldehyde 3-phosphate (G3P) to form fructose 1,6-bisphosphate (FBP) in gluconeogenesis and the reverse reaction in glycolysis. The sequence is that of Fructose-bisphosphate aldolase (cbbA) from Rhizobium meliloti (strain 1021) (Ensifer meliloti).